The chain runs to 347 residues: NADH-ubiquinone oxidoreductase chain 2 (347 aa).

The next 11 helical transmembrane spans lie at 3–23 (PPIL…VLMS), 25–45 (HWLM…PILM), 59–79 (YFLT…INLM), 96–116 (TMMT…FWVP), 122–142 (VHMS…LLVL), 149–169 (IDPN…GWGG), 178–198 (ILAY…LYNP), 200–220 (MMLL…MLFM), 242–262 (SLIL…GFIP), 274–294 (EMII…YFYM), and 323–343 (MILL…TPLL).

This sequence belongs to the complex I subunit 2 family. In terms of assembly, core subunit of respiratory chain NADH dehydrogenase (Complex I) which is composed of 45 different subunits. Interacts with TMEM242.

The protein localises to the mitochondrion inner membrane. It carries out the reaction a ubiquinone + NADH + 5 H(+)(in) = a ubiquinol + NAD(+) + 4 H(+)(out). Functionally, core subunit of the mitochondrial membrane respiratory chain NADH dehydrogenase (Complex I) that is believed to belong to the minimal assembly required for catalysis. Complex I functions in the transfer of electrons from NADH to the respiratory chain. The immediate electron acceptor for the enzyme is believed to be ubiquinone. This Suricata suricatta (Meerkat) protein is NADH-ubiquinone oxidoreductase chain 2.